The primary structure comprises 395 residues: S-adenosylmethionine synthase (395 aa).

His-16 contributes to the ATP binding site. Residue Asp-18 participates in Mg(2+) binding. Glu-44 serves as a coordination point for K(+). 2 residues coordinate L-methionine: Glu-57 and Gln-100. The segment at 100-110 (QSPDIAQGVDR) is flexible loop. ATP contacts are provided by residues 167-169 (DAK), 233-234 (RF), Asp-242, 248-249 (RK), Ala-265, and Lys-269. Asp-242 contacts L-methionine. Residue Lys-273 coordinates L-methionine.

This sequence belongs to the AdoMet synthase family. In terms of assembly, homotetramer; dimer of dimers. It depends on Mg(2+) as a cofactor. K(+) serves as cofactor.

The protein localises to the cytoplasm. It carries out the reaction L-methionine + ATP + H2O = S-adenosyl-L-methionine + phosphate + diphosphate. The protein operates within amino-acid biosynthesis; S-adenosyl-L-methionine biosynthesis; S-adenosyl-L-methionine from L-methionine: step 1/1. In terms of biological role, catalyzes the formation of S-adenosylmethionine (AdoMet) from methionine and ATP. The overall synthetic reaction is composed of two sequential steps, AdoMet formation and the subsequent tripolyphosphate hydrolysis which occurs prior to release of AdoMet from the enzyme. This is S-adenosylmethionine synthase from Burkholderia ambifaria (strain MC40-6).